Here is a 269-residue protein sequence, read N- to C-terminus: Aminodeoxychorismate lyase (269 aa).

Lys140 is subject to N6-(pyridoxal phosphate)lysine.

It belongs to the class-IV pyridoxal-phosphate-dependent aminotransferase family. Homodimer. Requires pyridoxal 5'-phosphate as cofactor.

It catalyses the reaction 4-amino-4-deoxychorismate = 4-aminobenzoate + pyruvate + H(+). The protein operates within cofactor biosynthesis; tetrahydrofolate biosynthesis; 4-aminobenzoate from chorismate: step 2/2. Involved in the biosynthesis of p-aminobenzoate (PABA), a precursor of tetrahydrofolate. Converts 4-amino-4-deoxychorismate into 4-aminobenzoate (PABA) and pyruvate. In Escherichia coli (strain K12), this protein is Aminodeoxychorismate lyase (pabC).